The primary structure comprises 876 residues: Alanine--tRNA ligase (876 aa).

Zn(2+) contacts are provided by His-563, His-567, Cys-665, and His-669.

It belongs to the class-II aminoacyl-tRNA synthetase family. Zn(2+) serves as cofactor.

The protein resides in the cytoplasm. It catalyses the reaction tRNA(Ala) + L-alanine + ATP = L-alanyl-tRNA(Ala) + AMP + diphosphate. Catalyzes the attachment of alanine to tRNA(Ala) in a two-step reaction: alanine is first activated by ATP to form Ala-AMP and then transferred to the acceptor end of tRNA(Ala). Also edits incorrectly charged Ser-tRNA(Ala) and Gly-tRNA(Ala) via its editing domain. This Shouchella clausii (strain KSM-K16) (Alkalihalobacillus clausii) protein is Alanine--tRNA ligase.